The sequence spans 192 residues: SPbeta prophage-derived uncharacterized protein YokK (192 aa).

This chain is SPbeta prophage-derived uncharacterized protein YokK (yokK), found in Bacillus subtilis (strain 168).